Consider the following 66-residue polypeptide: Large ribosomal subunit protein bL33c (66 aa).

It belongs to the bacterial ribosomal protein bL33 family.

The protein localises to the plastid. The protein resides in the chloroplast. The polypeptide is Large ribosomal subunit protein bL33c (Angiopteris evecta (Mule's foot fern)).